Reading from the N-terminus, the 354-residue chain is tRNA N6-adenosine threonylcarbamoyltransferase (354 aa).

Fe cation-binding residues include His111 and His115. Residues 134–138 (LVSGG), Asp167, Gly180, and Asn279 each bind substrate. Asp319 is a binding site for Fe cation.

It belongs to the KAE1 / TsaD family. Requires Fe(2+) as cofactor.

It localises to the cytoplasm. It carries out the reaction L-threonylcarbamoyladenylate + adenosine(37) in tRNA = N(6)-L-threonylcarbamoyladenosine(37) in tRNA + AMP + H(+). In terms of biological role, required for the formation of a threonylcarbamoyl group on adenosine at position 37 (t(6)A37) in tRNAs that read codons beginning with adenine. Is involved in the transfer of the threonylcarbamoyl moiety of threonylcarbamoyl-AMP (TC-AMP) to the N6 group of A37, together with TsaE and TsaB. TsaD likely plays a direct catalytic role in this reaction. The polypeptide is tRNA N6-adenosine threonylcarbamoyltransferase (Neisseria meningitidis).